Reading from the N-terminus, the 214-residue chain is uncharacterized protein (214 aa).

The N-terminal stretch at Met-1 to Gly-18 is a signal peptide. A glycan (N-linked (GlcNAc...) asparagine; by host) is linked at Asn-64.

This is an uncharacterized protein from Magallana gigas (Pacific oyster).